We begin with the raw amino-acid sequence, 157 residues long: MTEKPTYLTREGRARLEAELEYLTTVERKQIAERIAAAKELGDISESGEYEDAKKAQALLEGRIRELKHLLSRAEVIDEDQASNGEVRVGSSVTVRFEDDGTEETWTIVGSAEANPRQGRISNESPLGAALLGKRARNKVTVHTPSGVMKLTILKVR.

Residues 47–75 (SGEYEDAKKAQALLEGRIRELKHLLSRAE) adopt a coiled-coil conformation.

Belongs to the GreA/GreB family.

Its function is as follows. Necessary for efficient RNA polymerase transcription elongation past template-encoded arresting sites. The arresting sites in DNA have the property of trapping a certain fraction of elongating RNA polymerases that pass through, resulting in locked ternary complexes. Cleavage of the nascent transcript by cleavage factors such as GreA or GreB allows the resumption of elongation from the new 3'terminus. GreA releases sequences of 2 to 3 nucleotides. The sequence is that of Transcription elongation factor GreA from Chloroflexus aurantiacus (strain ATCC 29366 / DSM 635 / J-10-fl).